Here is a 90-residue protein sequence, read N- to C-terminus: Small ribosomal subunit protein mS37 (90 aa).

Cysteines 27 and 58 form a disulfide.

This sequence belongs to the mitochondrion-specific ribosomal protein mS37 family. In terms of assembly, component of the mitochondrial small ribosomal subunit (mt-SSU). Mature N.crassa 74S mitochondrial ribosomes consist of a small (37S) and a large (54S) subunit. The 37S small subunit contains a 16S ribosomal RNA (16S mt-rRNA) and 32 different proteins. The 54S large subunit contains a 23S rRNA (23S mt-rRNA) and 42 different proteins.

The protein localises to the mitochondrion. Functionally, component of the mitochondrial ribosome (mitoribosome), a dedicated translation machinery responsible for the synthesis of mitochondrial genome-encoded proteins, including at least some of the essential transmembrane subunits of the mitochondrial respiratory chain. The mitoribosomes are attached to the mitochondrial inner membrane and translation products are cotranslationally integrated into the membrane. This Neurospora crassa (strain ATCC 24698 / 74-OR23-1A / CBS 708.71 / DSM 1257 / FGSC 987) protein is Small ribosomal subunit protein mS37 (mrp10).